Reading from the N-terminus, the 217-residue chain is MAAHSIFTTTSTTNSFLYPISSSSSSPNINSSFLGVSLNVNAKFGQSLTLYAVTTPKPLTVFAATKKAVAVLKGNSNVEGVVTLSQDDDGPTTVNVRITGLAPGLHGFHLHEYGDTTNGCMSTGAHFNPNKLTHGAPGDEIRHAGDLGNIVANADGVAEVTLVDNQIPLTGPNSVVGRALVVHELEDDLGKGGHELSLTTGNAGGRLACGVVGLTPI.

A chloroplast-targeting transit peptide spans 1 to 63 (MAAHSIFTTT…TTPKPLTVFA (63 aa)). The Cu cation site is built by His109, His111, and His126. Cys120 and Cys209 are oxidised to a cystine. 4 residues coordinate Zn(2+): His126, His134, His143, and Asp146. Cu cation is bound at residue His183.

This sequence belongs to the Cu-Zn superoxide dismutase family. As to quaternary structure, homotetramer. Cu cation is required as a cofactor. It depends on Zn(2+) as a cofactor.

Its subcellular location is the plastid. The protein localises to the chloroplast. The catalysed reaction is 2 superoxide + 2 H(+) = H2O2 + O2. Destroys radicals which are normally produced within the cells and which are toxic to biological systems. This Solanum lycopersicum (Tomato) protein is Superoxide dismutase [Cu-Zn], chloroplastic (SODCP.2).